We begin with the raw amino-acid sequence, 216 residues long: Adenylate kinase (216 aa).

An ATP-binding site is contributed by 10 to 15 (GAGKGT). The tract at residues 30 to 59 (STGDMFRAAMKNETALGLEAKSYIDKGELV) is NMP. AMP is bound by residues Thr31, Arg36, 57-59 (ELV), 85-88 (GFPR), and Gln92. The tract at residues 126–164 (GRFICRTCGATYHKLFNPPKVEGTCDRCGGHEFYQREDD) is LID. Arg127 contacts ATP. Residues Cys130 and Cys133 each contribute to the Zn(2+) site. 136–137 (TY) lines the ATP pocket. Positions 150 and 153 each coordinate Zn(2+). 2 residues coordinate AMP: Arg161 and Arg172. Arg200 provides a ligand contact to ATP.

It belongs to the adenylate kinase family. Monomer.

Its subcellular location is the cytoplasm. It catalyses the reaction AMP + ATP = 2 ADP. The protein operates within purine metabolism; AMP biosynthesis via salvage pathway; AMP from ADP: step 1/1. Functionally, catalyzes the reversible transfer of the terminal phosphate group between ATP and AMP. Plays an important role in cellular energy homeostasis and in adenine nucleotide metabolism. The sequence is that of Adenylate kinase from Enterococcus faecalis (strain ATCC 700802 / V583).